The chain runs to 311 residues: Bifunctional pinoresinol-lariciresinol reductase (311 aa).

Residues 10 to 16 (GGTGYLG), R35, and K44 contribute to the NADP(+) site. K138 functions as the Proton acceptor in the catalytic mechanism. NADP(+) is bound at residue R142. H270 provides a ligand contact to substrate.

The protein belongs to the NmrA-type oxidoreductase family. Isoflavone reductase subfamily. Dimer. As to expression, expressed in rhizomes, stems, and leaves.

The catalysed reaction is (-)-secoisolariciresinol + NADP(+) = (+)-lariciresinol + NADPH + H(+). It carries out the reaction (+)-lariciresinol + NADP(+) = (+)-pinoresinol + NADPH + H(+). The protein operates within aromatic compound metabolism; phenylpropanoid biosynthesis. Its function is as follows. Reductase involved in lignan biosynthesis. Also involved in the biosynthesis of etoposide, a chemotherapeutic compound of the topoisomerase inhibitor family. Catalyzes the enantioselective sequential conversion of (+)-pinoresinol into (+)-lariciresinol and of (+)-lariciresinol into (-)-secoisolariciresinol. Abstracts the 4R-hydride from the NADPH cofactor during catalysis. This is Bifunctional pinoresinol-lariciresinol reductase from Sinopodophyllum hexandrum (Himalayan may apple).